The chain runs to 200 residues: Histone H1 (200 aa).

The segment covering 1 to 14 has biased composition (low complexity); the sequence is MPPKKAPTTAKKAA. Disordered stretches follow at residues 1 to 20 and 78 to 200; these read MPPK…PTHT and DFIQ…NKKA. The H15 domain maps to 18–93; the sequence is THTSYRDMIK…GTSGPVKLAK (76 aa). The span at 94 to 116 shows a compositional bias: low complexity; that stretch reads KQAPAKPAPKKPATTTKTAAPKK. The span at 120-131 shows a compositional bias: basic and acidic residues; sequence KKADKAEKAEKP. Over residues 159–185 the composition is skewed to low complexity; the sequence is TAAPAVVDKPKVVSVTKSGRKTTTTAK.

The protein belongs to the histone H1/H5 family.

Its subcellular location is the nucleus. It localises to the chromosome. Its function is as follows. Could act as an H1-type linker histone. In Emericella nidulans (strain FGSC A4 / ATCC 38163 / CBS 112.46 / NRRL 194 / M139) (Aspergillus nidulans), this protein is Histone H1 (hhoA).